The sequence spans 257 residues: Ribosomal large subunit pseudouridine synthase B (257 aa).

Residues 3–63 (AKIQKILSDL…KKKIIVKRNK (61 aa)) form the S4 RNA-binding domain. D109 functions as the Nucleophile in the catalytic mechanism.

The protein belongs to the pseudouridine synthase RsuA family.

It carries out the reaction uridine(2605) in 23S rRNA = pseudouridine(2605) in 23S rRNA. Its function is as follows. Responsible for synthesis of pseudouridine from uracil-2605 in 23S ribosomal RNA. This is Ribosomal large subunit pseudouridine synthase B (rluB) from Buchnera aphidicola subsp. Schizaphis graminum (strain Sg).